The sequence spans 119 residues: Small ribosomal subunit protein bS16 (119 aa).

The protein belongs to the bacterial ribosomal protein bS16 family.

This chain is Small ribosomal subunit protein bS16, found in Chlamydia caviae (strain ATCC VR-813 / DSM 19441 / 03DC25 / GPIC) (Chlamydophila caviae).